The following is a 138-amino-acid chain: Cell division protein SepF (138 aa).

A disordered region spans residues 1-59 (MNNKFKDFFGFGDNDSYEERDAYEEHYDEQEEMQNSNRPTNSRDSNVVSIKAGQAGSGP). Polar residues predominate over residues 33 to 48 (MQNSNRPTNSRDSNVV).

Belongs to the SepF family. As to quaternary structure, homodimer. Interacts with FtsZ.

The protein resides in the cytoplasm. Functionally, cell division protein that is part of the divisome complex and is recruited early to the Z-ring. Probably stimulates Z-ring formation, perhaps through the cross-linking of FtsZ protofilaments. Its function overlaps with FtsA. The chain is Cell division protein SepF from Lactobacillus delbrueckii subsp. bulgaricus (strain ATCC 11842 / DSM 20081 / BCRC 10696 / JCM 1002 / NBRC 13953 / NCIMB 11778 / NCTC 12712 / WDCM 00102 / Lb 14).